The chain runs to 202 residues: Pyridoxal 5'-phosphate synthase subunit PdxT (202 aa).

52–54 contributes to the L-glutamine binding site; sequence GES. Cys84 serves as the catalytic Nucleophile. L-glutamine contacts are provided by residues Arg116 and 143-144; that span reads IR. Residues His184 and Glu186 each act as charge relay system in the active site.

It belongs to the glutaminase PdxT/SNO family. As to quaternary structure, in the presence of PdxS, forms a dodecamer of heterodimers. Only shows activity in the heterodimer.

It carries out the reaction aldehydo-D-ribose 5-phosphate + D-glyceraldehyde 3-phosphate + L-glutamine = pyridoxal 5'-phosphate + L-glutamate + phosphate + 3 H2O + H(+). The catalysed reaction is L-glutamine + H2O = L-glutamate + NH4(+). Its pathway is cofactor biosynthesis; pyridoxal 5'-phosphate biosynthesis. In terms of biological role, catalyzes the hydrolysis of glutamine to glutamate and ammonia as part of the biosynthesis of pyridoxal 5'-phosphate. The resulting ammonia molecule is channeled to the active site of PdxS. This Pyrobaculum neutrophilum (strain DSM 2338 / JCM 9278 / NBRC 100436 / V24Sta) (Thermoproteus neutrophilus) protein is Pyridoxal 5'-phosphate synthase subunit PdxT.